The sequence spans 289 residues: Proteasome subunit beta (289 aa).

Residues 1–55 (MTWPLPDRLSINSAISGSAVDLSSFAEFLRRQAPELLPASIKHGGGAVGDQLPHA) constitute a propeptide, removed in mature form; by autocatalysis. Catalysis depends on Thr-56, which acts as the Nucleophile.

It belongs to the peptidase T1B family. As to quaternary structure, the 20S proteasome core is composed of 14 alpha and 14 beta subunits that assemble into four stacked heptameric rings, resulting in a barrel-shaped structure. The two inner rings, each composed of seven catalytic beta subunits, are sandwiched by two outer rings, each composed of seven alpha subunits. The catalytic chamber with the active sites is on the inside of the barrel. Has a gated structure, the ends of the cylinder being occluded by the N-termini of the alpha-subunits. Is capped by the proteasome-associated ATPase, ARC.

It is found in the cytoplasm. It catalyses the reaction Cleavage of peptide bonds with very broad specificity.. The protein operates within protein degradation; proteasomal Pup-dependent pathway. The formation of the proteasomal ATPase ARC-20S proteasome complex, likely via the docking of the C-termini of ARC into the intersubunit pockets in the alpha-rings, may trigger opening of the gate for substrate entry. Interconversion between the open-gate and close-gate conformations leads to a dynamic regulation of the 20S proteasome proteolysis activity. Functionally, component of the proteasome core, a large protease complex with broad specificity involved in protein degradation. In Mycobacterium marinum (strain ATCC BAA-535 / M), this protein is Proteasome subunit beta.